Reading from the N-terminus, the 381-residue chain is DNA double-strand break repair protein Mre11 (381 aa).

Positions 9, 11, 50, and 85 each coordinate Mn(2+). Residue H86 is the Proton donor of the active site. Mn(2+)-binding residues include H156, H187, and H189.

The protein belongs to the MRE11/RAD32 family. Homodimer. Forms a heterotetramer composed of two Mre11 subunits and two Rad50 subunits. The cofactor is Mn(2+).

Nuclease activity is regulated by Rad50. Its function is as follows. Part of the Rad50/Mre11 complex, which is involved in the early steps of DNA double-strand break (DSB) repair. The complex may facilitate opening of the processed DNA ends to aid in the recruitment of HerA and NurA. Mre11 binds to DSB ends and has both double-stranded 3'-5' exonuclease activity and single-stranded endonuclease activity. The chain is DNA double-strand break repair protein Mre11 from Saccharolobus solfataricus (strain ATCC 35092 / DSM 1617 / JCM 11322 / P2) (Sulfolobus solfataricus).